Here is a 218-residue protein sequence, read N- to C-terminus: Small ribosomal subunit protein uS3c (218 aa).

The region spanning 47–118 (VQKNMRIFSG…KLNIAITRIG (72 aa)) is the KH type-2 domain.

Belongs to the universal ribosomal protein uS3 family. As to quaternary structure, part of the 30S ribosomal subunit.

It is found in the plastid. Its subcellular location is the chloroplast. The chain is Small ribosomal subunit protein uS3c (rps3) from Cucumis sativus (Cucumber).